Consider the following 466-residue polypeptide: Cysteine--tRNA ligase (466 aa).

Cysteine 28 lines the Zn(2+) pocket. The 'HIGH' region motif lies at 30–40 (PTVYNFFHIGN). Zn(2+)-binding residues include cysteine 208, histidine 233, and glutamate 237. A 'KMSKS' region motif is present at residues 265-269 (KMSKS). Lysine 268 provides a ligand contact to ATP.

This sequence belongs to the class-I aminoacyl-tRNA synthetase family. As to quaternary structure, monomer. Zn(2+) serves as cofactor.

It is found in the cytoplasm. It carries out the reaction tRNA(Cys) + L-cysteine + ATP = L-cysteinyl-tRNA(Cys) + AMP + diphosphate. The polypeptide is Cysteine--tRNA ligase (Clostridium perfringens (strain ATCC 13124 / DSM 756 / JCM 1290 / NCIMB 6125 / NCTC 8237 / Type A)).